The following is a 428-amino-acid chain: C4-dicarboxylate transport protein (428 aa).

A run of 8 helical transmembrane segments spans residues 8 to 28 (SLYFQVLTAIAIGILLGHFYP), 44 to 64 (LIKMIIAPVIFCTVVTGIAGM), 76 to 96 (VALLYFEVVSTIALIIGLIIV), 142 to 162 (IGAFASGNILQVLLFAVLFGF), 184 to 204 (VIFGIINMIMRLAPIGAFGAM), 222 to 242 (LIICFYITCILFVVVVLGSIA), 326 to 346 (IFHQITLLVVLLLSSKGAAGV), and 352 to 372 (IVLAATISAVGHLPIAGLALI).

It belongs to the dicarboxylate/amino acid:cation symporter (DAACS) (TC 2.A.23) family.

The protein localises to the cell inner membrane. Functionally, responsible for the transport of dicarboxylates such as succinate, fumarate, and malate from the periplasm across the membrane. This is C4-dicarboxylate transport protein from Enterobacter sp. (strain 638).